Consider the following 412-residue polypeptide: Flap endonuclease 1-B (412 aa).

An N-domain region spans residues 1 to 105 (MGIKGLTKLL…KELAKRSLKR (105 aa)). Asp34 is a binding site for Mg(2+). Arg71 lines the DNA pocket. Mg(2+) is bound by residues Asp87, Glu159, Glu161, Asp180, and Asp182. The I-domain stretch occupies residues 123–254 (LIEKFSKRTV…QRALKLIRQH (132 aa)). Glu159 is a DNA binding site. The DNA site is built by Gly232 and Asp234. Asp234 contributes to the Mg(2+) binding site.

It belongs to the XPG/RAD2 endonuclease family. FEN1 subfamily. Interacts with PCNA. Three molecules of FEN1 bind to one PCNA trimer with each molecule binding to one PCNA monomer. PCNA stimulates the nuclease activity without altering cleavage specificity. Mg(2+) is required as a cofactor. Post-translationally, phosphorylated. Phosphorylation upon DNA damage induces relocalization to the nuclear plasma.

It localises to the nucleus. The protein localises to the nucleolus. It is found in the nucleoplasm. The protein resides in the mitochondrion. Functionally, structure-specific nuclease with 5'-flap endonuclease and 5'-3' exonuclease activities involved in DNA replication and repair. During DNA replication, cleaves the 5'-overhanging flap structure that is generated by displacement synthesis when DNA polymerase encounters the 5'-end of a downstream Okazaki fragment. It enters the flap from the 5'-end and then tracks to cleave the flap base, leaving a nick for ligation. Also involved in the long patch base excision repair (LP-BER) pathway, by cleaving within the apurinic/apyrimidinic (AP) site-terminated flap. Acts as a genome stabilization factor that prevents flaps from equilibrating into structures that lead to duplications and deletions. Also possesses 5'-3' exonuclease activity on nicked or gapped double-stranded DNA, and exhibits RNase H activity. Also involved in replication and repair of rDNA and in repairing mitochondrial DNA. The sequence is that of Flap endonuclease 1-B from Oryza sativa subsp. indica (Rice).